The primary structure comprises 37 residues: Large ribosomal subunit protein bL36c (37 aa).

The protein belongs to the bacterial ribosomal protein bL36 family.

It is found in the plastid. It localises to the chloroplast. In Anthoceros angustus (Hornwort), this protein is Large ribosomal subunit protein bL36c (rpl36).